A 122-amino-acid polypeptide reads, in one-letter code: Protein NIM1-INTERACTING 2 (122 aa).

Over residues 1 to 22 (MNNSLKKEERVEEDNGKSDGNR) the composition is skewed to basic and acidic residues. Positions 1–28 (MNNSLKKEERVEEDNGKSDGNRGKPSTE) are disordered. The involved in NPR1/NIM1 interaction stretch occupies residues 39–45 (DEFFKIL). The Nuclear localization signal signature appears at 70–74 (KKRKR).

Interacts with NPR1 N-terminal region.

The protein localises to the nucleus. This Arabidopsis thaliana (Mouse-ear cress) protein is Protein NIM1-INTERACTING 2.